A 351-amino-acid chain; its full sequence is Ferrochelatase (351 aa).

Residues H220 and E301 each contribute to the Fe cation site.

Belongs to the ferrochelatase family.

Its subcellular location is the cytoplasm. It carries out the reaction heme b + 2 H(+) = protoporphyrin IX + Fe(2+). It functions in the pathway porphyrin-containing compound metabolism; protoheme biosynthesis; protoheme from protoporphyrin-IX: step 1/1. Functionally, catalyzes the ferrous insertion into protoporphyrin IX. The polypeptide is Ferrochelatase (Rhodobacter capsulatus (Rhodopseudomonas capsulata)).